The sequence spans 473 residues: MKTLYSLRRFYHVETLFNGTLALAGRDQETTGFAWWAGNARLINLSGKLLGAHVAHAGLIVFWAGAMNLFEVAHFVPEKPMYEQGLILLPHLATLGWGVGPGGEVIDTFPYFVSGVLHLISSAVLGFGGIYHALLGPETLEESFPFFGYVWKDRNKMTTILGIHLILLGIGAFLLVFKALYFGGVYDTWAPGGGDVRKITNLTLSPSIIFGYLLKSPFGGEGWIVSVDDLEDIIGGHVWLGSICILGGIWHILTKPFAWARRALVWSGEAYLSYSLGALAVFGFIACCFVWFNNTAYPSEFYGPTGPEASQAQAFTFLVRDQRLGANVGSAQGPTGLGKYLMRSPTGEVIFGGETMRFWDLRAPWLEPLRGPNGLDLSRLKKDIQPWQERRSAEYMTHAPLGSLNSVGGVATEINAVNYVSPRSWLATSHFVLGFFFFVGHLWHAGRARAAAAGFEKGIDRDFEPVLSMTPLN.

Positions 1-14 (MKTLYSLRRFYHVE) are excised as a propeptide. Position 15 is an N-acetylthreonine (T15). T15 carries the phosphothreonine modification. Transmembrane regions (helical) follow at residues 69–93 (LFEV…PHLA), 134–155 (LLGP…KDRN), 178–200 (KALY…RKIT), 255–275 (KPFA…LSYS), and 291–312 (WFNN…ASQA). E367 contributes to the [CaMn4O5] cluster binding site. Residues 447–471 (RARAAAAGFEKGIDRDFEPVLSMTP) form a helical membrane-spanning segment.

This sequence belongs to the PsbB/PsbC family. PsbC subfamily. PSII is composed of 1 copy each of membrane proteins PsbA, PsbB, PsbC, PsbD, PsbE, PsbF, PsbH, PsbI, PsbJ, PsbK, PsbL, PsbM, PsbT, PsbX, PsbY, PsbZ, Psb30/Ycf12, at least 3 peripheral proteins of the oxygen-evolving complex and a large number of cofactors. It forms dimeric complexes. Requires Binds multiple chlorophylls and provides some of the ligands for the Ca-4Mn-5O cluster of the oxygen-evolving complex. It may also provide a ligand for a Cl- that is required for oxygen evolution. PSII binds additional chlorophylls, carotenoids and specific lipids. as cofactor.

It localises to the plastid. The protein localises to the chloroplast thylakoid membrane. Functionally, one of the components of the core complex of photosystem II (PSII). It binds chlorophyll and helps catalyze the primary light-induced photochemical processes of PSII. PSII is a light-driven water:plastoquinone oxidoreductase, using light energy to abstract electrons from H(2)O, generating O(2) and a proton gradient subsequently used for ATP formation. The protein is Photosystem II CP43 reaction center protein of Atropa belladonna (Belladonna).